Reading from the N-terminus, the 227-residue chain is MRITLPLLSTAVGLGLTAAVLGTGPAATAAAPQEPVRAAQLGYQPSAGSGEDAAANRAFFEAVVKSVAEKRAANPSAAAAVTVYYSATNAPSFRSQISRSAQIWNSSVSNVRLAESSSGADFAYYEGNDSRGSYASTDGHGSGYIFLDYRQNQQYDSTRVTAHETGHVLGLPDHYSGPCSELMSGGGPGPSCTNPYPNSTERSRVNQLWAYGFQAALDKALEKASQR.

The first 29 residues, 1–29 (MRITLPLLSTAVGLGLTAAVLGTGPAATA), serve as a signal peptide directing secretion. Positions 30 to 42 (AAPQEPVRAAQLG) are excised as a propeptide. Residues aspartate 156 and threonine 158 each contribute to the Ca(2+) site. Zn(2+) is bound at residue histidine 163. Glutamate 164 is an active-site residue. Positions 167 and 173 each coordinate Zn(2+). A disulfide bridge connects residues cysteine 179 and cysteine 192.

The protein belongs to the peptidase M7 family. Requires Ca(2+) as cofactor. Zn(2+) is required as a cofactor. In terms of processing, the N-terminus is blocked.

It localises to the secreted. It carries out the reaction Hydrolyzes proteins with a preference for Tyr or Phe in the P1' position. Has no action on amino-acid p-nitroanilides.. This is Extracellular small neutral protease (snpA) from Streptomyces lividans.